The chain runs to 115 residues: Large ribosomal subunit protein bL19 (115 aa).

Belongs to the bacterial ribosomal protein bL19 family.

This protein is located at the 30S-50S ribosomal subunit interface and may play a role in the structure and function of the aminoacyl-tRNA binding site. This is Large ribosomal subunit protein bL19 from Desulforapulum autotrophicum (strain ATCC 43914 / DSM 3382 / VKM B-1955 / HRM2) (Desulfobacterium autotrophicum).